A 126-amino-acid polypeptide reads, in one-letter code: Small ribosomal subunit protein uS12 (126 aa).

The disordered stretch occupies residues M1 to P28. D89 carries the post-translational modification 3-methylthioaspartic acid. A disordered region spans residues D103–K126. The segment covering A113–K126 has biased composition (basic residues).

This sequence belongs to the universal ribosomal protein uS12 family. In terms of assembly, part of the 30S ribosomal subunit. Contacts proteins S8 and S17. May interact with IF1 in the 30S initiation complex.

Functionally, with S4 and S5 plays an important role in translational accuracy. Its function is as follows. Interacts with and stabilizes bases of the 16S rRNA that are involved in tRNA selection in the A site and with the mRNA backbone. Located at the interface of the 30S and 50S subunits, it traverses the body of the 30S subunit contacting proteins on the other side and probably holding the rRNA structure together. The combined cluster of proteins S8, S12 and S17 appears to hold together the shoulder and platform of the 30S subunit. This is Small ribosomal subunit protein uS12 from Burkholderia orbicola (strain MC0-3).